Here is a 601-residue protein sequence, read N- to C-terminus: Glutathione-regulated potassium-efflux system protein KefB (601 aa).

13 helical membrane-spanning segments follow: residues 5–25 (DLLL…PIAA), 29–49 (IGAV…GLGF), 55–75 (EILH…GLEL), 87–107 (IFGI…GLLM), 115–135 (AAVV…LQLM), 152–172 (VLLF…LLAG), 181–201 (LKIG…RYLL), 207–227 (FIAG…LVLG), 230–250 (LFMD…GILL), 268–288 (GLLL…GVLY), 291–311 (ILWV…VLYG), 324–344 (LPFA…FSSA), and 356–376 (ALLL…MKGI). One can recognise an RCK N-terminal domain in the interval 400–519 (KPQVIIVGFG…AGVKQFSRET (120 aa)).

It belongs to the monovalent cation:proton antiporter 2 (CPA2) transporter (TC 2.A.37) family. KefB subfamily. As to quaternary structure, interacts with the regulatory subunit KefG.

It localises to the cell inner membrane. Pore-forming subunit of a potassium efflux system that confers protection against electrophiles. Catalyzes K(+)/H(+) antiport. The protein is Glutathione-regulated potassium-efflux system protein KefB of Cronobacter sakazakii (strain ATCC BAA-894) (Enterobacter sakazakii).